The primary structure comprises 162 residues: Balbiani ring protein 2 (162 aa).

Residues 1 to 31 form a last constant region region; sequence CDDAMRKTESDKCTNIGGKFDPSTCKCTPET. Residues 32 to 51 are last Cys-1 repeat; that stretch reads VTEGPTTCLESSESDEVTTK. The interval 52–162 is unique region; it reads KPCDCTCAPD…VKGLEDILNS (111 aa).

Salivary gland.

The protein localises to the secreted. Used by the larvae to construct a supramolecular structure, the larval tube. In Chironomus pallidivittatus (Midge), this protein is Balbiani ring protein 2 (BR2).